Reading from the N-terminus, the 464-residue chain is ESX-1 secretion system protein EccE1 (464 aa).

The next 2 membrane-spanning stretches (helical) occupy residues 11–31 and 34–54; these read FTTGHGIWAATLIPACIAICM and DLLWLGITLGALIALFSVLTI.

The protein belongs to the EccE family. In terms of assembly, part of the ESX-1 / type VII secretion system (T7SS), which is composed of cytosolic and membrane components. The ESX-1 membrane complex is composed of EccB1, EccCa1, EccCb1, EccD1 and EccE1.

It is found in the cell inner membrane. In terms of biological role, part of the ESX-1 / type VII specialized secretion system (T7SS), which exports several proteins including EsxA and EsxB. Plays a role in DNA conjugation, in at least a donor strain. The protein is ESX-1 secretion system protein EccE1 of Mycolicibacterium smegmatis (strain ATCC 700084 / mc(2)155) (Mycobacterium smegmatis).